Reading from the N-terminus, the 327-residue chain is MKISILGAGSFGTAIAIALSAHGISVNLWGRDHRNITHINTYRKNLKYLPTYHLPDNIYATSNIDEVLSDNNTCIILTVPTQQLRTICTQIQHKQHMCKNTPMLICSKGIEITSLKFPSEIAEEILQYNPIFILSGPSFAKEIAEHLPCSIVLAGDNKELGESLIEKISNDVLKIIYHQDIIGVQIGAALKNIIAIACGIIAGKNLGNNAVATVITKGMNEIKTLYIAKNHSIDLHTLIGPSCLGDLILTCTTEHSRNMAFGLEIGKGRNINTLIDHNLKLVEGTSTVKPLISLAKKLNVELPICISIYNLLHENISLDKAISNILS.

4 residues coordinate NADPH: serine 10, phenylalanine 11, arginine 31, and lysine 108. Residues lysine 108, glycine 136, and serine 138 each coordinate sn-glycerol 3-phosphate. Alanine 140 contacts NADPH. The sn-glycerol 3-phosphate site is built by lysine 191, aspartate 246, serine 256, arginine 257, and asparagine 258. The Proton acceptor role is filled by lysine 191. NADPH is bound at residue arginine 257. The NADPH site is built by leucine 281 and glutamate 283.

Belongs to the NAD-dependent glycerol-3-phosphate dehydrogenase family.

It localises to the cytoplasm. It catalyses the reaction sn-glycerol 3-phosphate + NAD(+) = dihydroxyacetone phosphate + NADH + H(+). The catalysed reaction is sn-glycerol 3-phosphate + NADP(+) = dihydroxyacetone phosphate + NADPH + H(+). The protein operates within membrane lipid metabolism; glycerophospholipid metabolism. In terms of biological role, catalyzes the reduction of the glycolytic intermediate dihydroxyacetone phosphate (DHAP) to sn-glycerol 3-phosphate (G3P), the key precursor for phospholipid synthesis. This chain is Glycerol-3-phosphate dehydrogenase [NAD(P)+], found in Ehrlichia ruminantium (strain Gardel).